The chain runs to 839 residues: Small conductance calcium-activated potassium channel protein 2 (839 aa).

Disordered regions lie at residues 1–33, 64–115, 195–258, and 280–375; these read MPIV…QESP, QRGF…QQPG, ALRQ…RRES, and SNLS…KKNQ. 2 stretches are compositionally biased toward low complexity: residues 198 to 212 and 219 to 235; these read QQYA…QYHQ and ATSP…GPPL. Positions 236–253 are enriched in basic residues; that stretch reads SHHHHHPHPAHHQHHQPQ. Low complexity predominate over residues 313-326; the sequence is SSPSAAAAASSSAP. The span at 345-363 shows a compositional bias: gly residues; sequence GTGGGGSTGGGGGGSGHGS. A helical membrane pass occupies residues 398-418; that stretch reads ALIFGMFGIVVMVIETELSWG. Tyrosine 420 bears the Phosphotyrosine mark. The helical transmembrane segment at 428–448 threads the bilayer; sequence LALKCLISLSTIILLGLIIVY. A helical transmembrane segment spans residues 474 to 494; sequence IFFICLEILVCAIHPIPGNYT. A helical membrane pass occupies residues 516-536; sequence IILSIPMFLRLYLIARVMLLH. Residues 565-585 form a helical membrane-spanning segment; sequence LMTICPGTVLLVFSISLWIIA. Residues 605-625 constitute an intramembrane region (pore-forming); sequence FLGAMWLISITFLSIGYGDMV. The helical transmembrane segment at 634-654 threads the bilayer; it reads VCLLTGIMGAGCTALVVAVVA. Residues 672–748 form a calmodulin-binding region; sequence DTQLTKRVKN…LVDLAKTQNI (77 aa). The segment covering 810–819 has biased composition (basic and acidic residues); that stretch reads HVSYNAERSR. Residues 810-839 are disordered; that stretch reads HVSYNAERSRSSSRRRRSSSTAPPTSSESS. The span at 828-839 shows a compositional bias: low complexity; the sequence is SSTAPPTSSESS.

The protein belongs to the potassium channel KCNN family. KCa2.2/KCNN2 subfamily. As to quaternary structure, homodimer. Heteromultimer with KCNN1 and KCNN3. The complex is composed of 4 channel subunits each of which binds to a calmodulin subunit which regulates the channel activity through calcium-binding. Interacts (via N-terminal domain) with MPP2. Expressed in atrial and ventricular myocytes with higher levels in atrial myocytes (at protein level). Highly expressed in brain, liver and colon with low levels in kidney and testis. In colon, detected in smooth muscle cells.

Its subcellular location is the membrane. The protein resides in the cytoplasm. It is found in the myofibril. It localises to the sarcomere. The protein localises to the z line. The enzyme catalyses K(+)(in) = K(+)(out). With respect to regulation, inhibited by bee venom neurotoxin apamin. Inhibited by UCL 1684 and tetraethylammonium (TEA). Functionally, small conductance calcium-activated potassium channel that mediates the voltage-independent transmembrane transfer of potassium across the cell membrane through a constitutive interaction with calmodulin which binds the intracellular calcium allowing its opening. The current is characterized by a voltage-independent activation, an intracellular calcium concentration increase-dependent activation and a single-channel conductance of about 3 picosiemens. Also presents an inwardly rectifying current, thus reducing its already small outward conductance of potassium ions, which is particularly the case when the membrane potential displays positive values, above + 20 mV. The inward rectification could be due to a blockade of the outward current by intracellular divalent cations such as calcium and magnesium and could also be due to an intrinsic property of the channel pore, independent of intracellular divalent ions. There are three positively charged amino acids in the S6 transmembrane domain, close to the pore, that collectively control the conductance and rectification through an electrostatic mechanism. Additionally, electrostatic contributions from these residues also play an important role in determining the intrinsic open probability of the channel in the absence of calcium, affecting the apparent calcium affinity for activation. Forms an heteromeric complex with calmodulin, which is constitutively associated in a calcium-independent manner. Channel opening is triggered when calcium binds the calmodulin resulting in a rotary movement leading to the formation of the dimeric complex to open the gate. Plays a role in the repolarization phase of cardiac action potential. This Mus musculus (Mouse) protein is Small conductance calcium-activated potassium channel protein 2.